The following is a 255-amino-acid chain: MPEHTGFLTYLLAQLPGLRENARNIGKTFIGHHTVDYRGTEPIFMSLLIMVLFVLLASEVRGQYRRLNESVIPEDKLTLRTFFEAFFGYFYGMARDVMGPANAKRYFPLIGGSAAFIFFSNASALIPGVNPPTSNLNITIGCAVVVFVLFNYYGLKENGWSYVAHLAGPKWYLAPLIFPIEVISTCVRPVTLSIRLMLNIGVDHLVASIFLGLVALFVPVPLMFLAIIVIVVQTLVFCLLSCIYIGLATEKADHH.

The next 6 helical transmembrane spans lie at 40 to 60 (TEPI…ASEV), 109 to 129 (LIGG…IPGV), 135 to 155 (NLNI…YYGL), 163 to 183 (VAHL…IEVI), 196 to 218 (LMLN…ALFV), and 230 to 250 (IVVQ…LATE).

It belongs to the ATPase A chain family. In terms of assembly, F-type ATPases have 2 components, CF(1) - the catalytic core - and CF(0) - the membrane proton channel. CF(1) has five subunits: alpha(3), beta(3), gamma(1), delta(1), epsilon(1). CF(0) has three main subunits: a(1), b(2) and c(9-12). The alpha and beta chains form an alternating ring which encloses part of the gamma chain. CF(1) is attached to CF(0) by a central stalk formed by the gamma and epsilon chains, while a peripheral stalk is formed by the delta and b chains.

It is found in the cell inner membrane. Functionally, key component of the proton channel; it plays a direct role in the translocation of protons across the membrane. This is ATP synthase subunit a from Sorangium cellulosum (strain So ce56) (Polyangium cellulosum (strain So ce56)).